Here is a 537-residue protein sequence, read N- to C-terminus: P2Y purinoceptor 4 (537 aa).

The Extracellular segment spans residues 1–49 (MTEDIMATSYPTFLTTPYLPMKLLMNLTNDTEDICVFDEGFKFLLLPVS). Asn-26 and Asn-29 each carry an N-linked (GlcNAc...) asparagine glycan. The chain crosses the membrane as a helical span at residues 50–70 (YSAVFMVGLPLNIAAMWIFIA). Residues 71–79 (KMRPWNPTT) are Cytoplasmic-facing. Residues 80-100 (VYMFNLALSDTLYVLSLPTLV) form a helical membrane-spanning segment. Topologically, residues 101–118 (YYYADKNNWPFGEVLCKL) are extracellular. Residues Cys-116 and Cys-193 are joined by a disulfide bond. The chain crosses the membrane as a helical span at residues 119 to 139 (VRFLFYANLYSSILFLTCISV). Residues 140–161 (HRYRGVCHPITSLRRMNAKHAY) lie on the Cytoplasmic side of the membrane. A helical transmembrane segment spans residues 162–182 (VICALVWLSVTLCLVPNLIFV). Residues 183–210 (TVSPKVKNTICHDTTRPEDFARYVEYST) lie on the Extracellular side of the membrane. Residues 211–231 (AIMCLLFGIPCLIIAGCYGLM) traverse the membrane as a helical segment. Topologically, residues 232-254 (TRELMKPIVSGNQQTLPSYKKRS) are cytoplasmic. Residues 255–275 (IKTIIFVMIAFAICFMPFHIT) form a helical membrane-spanning segment. Residues 276–292 (RTLYYYARLLGIKCYAL) are Extracellular-facing. The helical transmembrane segment at 293–316 (NVINVTYKVTRPLASANSCIDPIL) threads the bilayer. Over 317–537 (YFLANDRYRR…EKELQNFPKA (221 aa)) the chain is Cytoplasmic. The segment at 401–505 (NRRSTIKRNS…GEGTSTWNLL (105 aa)) is disordered. Composition is skewed to basic and acidic residues over residues 409–423 (NSTD…RHGE) and 431–447 (VVEK…RKTT). Residues 448–465 (EQSSKTNAEQDELQTQID) are compositionally biased toward polar residues.

It belongs to the G-protein coupled receptor 1 family.

The protein localises to the cell membrane. Its function is as follows. Receptor for extracellular ATP, UTP, CTP, GTP and ITP. The activity of this receptor is mediated by G proteins which activate a phosphatidylinositol-calcium second messenger system. May play a key role in the early development of neural tissue. The sequence is that of P2Y purinoceptor 4 (p2ry4) from Xenopus laevis (African clawed frog).